Consider the following 954-residue polypeptide: Valine--tRNA ligase (954 aa).

The 'HIGH' region signature appears at 48–58; sequence PNVTGSLHMGH. The 'KMSKS' region motif lies at 560–564; it reads KMSKS. Lys-563 is a binding site for ATP. Residues 883-953 adopt a coiled-coil conformation; sequence AGFINKEAEL…LKQQYLAIEA (71 aa).

Belongs to the class-I aminoacyl-tRNA synthetase family. ValS type 1 subfamily. As to quaternary structure, monomer.

It localises to the cytoplasm. The catalysed reaction is tRNA(Val) + L-valine + ATP = L-valyl-tRNA(Val) + AMP + diphosphate. Its function is as follows. Catalyzes the attachment of valine to tRNA(Val). As ValRS can inadvertently accommodate and process structurally similar amino acids such as threonine, to avoid such errors, it has a 'posttransfer' editing activity that hydrolyzes mischarged Thr-tRNA(Val) in a tRNA-dependent manner. The sequence is that of Valine--tRNA ligase from Pasteurella multocida (strain Pm70).